Here is a 156-residue protein sequence, read N- to C-terminus: Small ribosomal subunit protein uS7 (156 aa).

The protein belongs to the universal ribosomal protein uS7 family. As to quaternary structure, part of the 30S ribosomal subunit. Contacts proteins S9 and S11.

In terms of biological role, one of the primary rRNA binding proteins, it binds directly to 16S rRNA where it nucleates assembly of the head domain of the 30S subunit. Is located at the subunit interface close to the decoding center, probably blocks exit of the E-site tRNA. This Bacillus velezensis (strain DSM 23117 / BGSC 10A6 / LMG 26770 / FZB42) (Bacillus amyloliquefaciens subsp. plantarum) protein is Small ribosomal subunit protein uS7.